Here is a 257-residue protein sequence, read N- to C-terminus: Deoxyribose-phosphate aldolase (257 aa).

The active-site Proton donor/acceptor is D102. K166 serves as the catalytic Schiff-base intermediate with acetaldehyde. The Proton donor/acceptor role is filled by K198.

This sequence belongs to the DeoC/FbaB aldolase family. DeoC type 2 subfamily.

The protein localises to the cytoplasm. The enzyme catalyses 2-deoxy-D-ribose 5-phosphate = D-glyceraldehyde 3-phosphate + acetaldehyde. It functions in the pathway carbohydrate degradation; 2-deoxy-D-ribose 1-phosphate degradation; D-glyceraldehyde 3-phosphate and acetaldehyde from 2-deoxy-alpha-D-ribose 1-phosphate: step 2/2. Its function is as follows. Catalyzes a reversible aldol reaction between acetaldehyde and D-glyceraldehyde 3-phosphate to generate 2-deoxy-D-ribose 5-phosphate. In Shewanella woodyi (strain ATCC 51908 / MS32), this protein is Deoxyribose-phosphate aldolase.